The following is a 314-amino-acid chain: Lysophospholipase D GDPD1 (314 aa).

Topologically, residues 1–3 are extracellular; the sequence is MSS. A helical transmembrane segment spans residues 4–24; the sequence is TAAFYLLSTLGGYLVTSFLLL. Over 25-195 the chain is Cytoplasmic; that stretch reads KYPTLLHQRK…VEKCYKENSD (171 aa). The 270-residue stretch at 40 to 309 folds into the GP-PDE domain; sequence SKHISHRGGA…DYPTKLRDFL (270 aa). Residues Glu72, Asp74, and His87 each coordinate a divalent metal cation. The chain crosses the membrane as a helical span at residues 196-216; the sequence is IPILFSLQRVLLILGLFFTGL. Over 217–314 the chain is Extracellular; sequence LPFVPIREQF…LRDFLHNFSA (98 aa).

It belongs to the glycerophosphoryl diester phosphodiesterase family. In terms of tissue distribution, widely expressed with high expression level in testis.

The protein localises to the cytoplasm. It is found in the membrane. Its subcellular location is the perinuclear region. It localises to the endoplasmic reticulum. The enzyme catalyses a 1-O-alkyl-sn-glycero-3-phosphocholine + H2O = a 1-O-alkyl-sn-glycero-3-phosphate + choline + H(+). The catalysed reaction is 1-hexadecanoyl-sn-glycero-3-phosphocholine + H2O = 1-hexadecanoyl-sn-glycero-3-phosphate + choline + H(+). It catalyses the reaction N-hexadecanoyl-sn-glycero-3-phosphoethanolamine + H2O = N-hexadecanoylethanolamine + sn-glycerol 3-phosphate + H(+). It carries out the reaction N-(5Z,8Z,11Z,14Z-eicosatetraenoyl)-1-(9Z-octadecenoyl)-sn-glycero-3-phosphoethanolamine + H2O = N-(5Z,8Z,11Z,14Z-eicosatetraenoyl)-ethanolamine + 1-(9Z-octadecenoyl)-sn-glycero-3-phosphate + H(+). The enzyme catalyses N,1-di-(9Z-octadecenoyl)-sn-glycero-3-phosphoethanolamine + H2O = N-(9Z-octadecenoyl) ethanolamine + 1-(9Z-octadecenoyl)-sn-glycero-3-phosphate + H(+). The catalysed reaction is N-hexadecanoyl-1-(9Z-octadecenoyl)-sn-glycero-3-phosphoethanolamine + H2O = N-hexadecanoylethanolamine + 1-(9Z-octadecenoyl)-sn-glycero-3-phosphate + H(+). It catalyses the reaction 1-O-(1Z-octadecenyl)-sn-glycero-3-phospho-N-hexadecanoyl-ethanolamine + H2O = 1-O-(1Z-octadecenyl)-sn-glycero-3-phosphate + N-hexadecanoylethanolamine + H(+). It carries out the reaction 1-hexadecanoyl-sn-glycero-3-phosphoethanolamine + H2O = 1-hexadecanoyl-sn-glycero-3-phosphate + ethanolamine + H(+). The enzyme catalyses 1-O-hexadecyl-sn-glycero-3-phosphocholine + H2O = 1-O-hexadecyl-sn-glycero-3-phosphate + choline + H(+). The catalysed reaction is 1-(9Z-octadecenoyl)-sn-glycero-3-phosphocholine + H2O = 1-(9Z-octadecenoyl)-sn-glycero-3-phosphate + choline + H(+). It catalyses the reaction N,1-dihexadecanoyl-sn-glycero-3-phosphoethanolamine + H2O = N-hexadecanoylethanolamine + 1-hexadecanoyl-sn-glycero-3-phosphate + H(+). It carries out the reaction 1-O-(1Z-octadecenyl)-sn-glycero-3-phospho-(N-5Z,8Z,11Z,14Z-eicosatetraenoyl)-ethanolamine + H2O = 1-O-(1Z-octadecenyl)-sn-glycero-3-phosphate + N-(5Z,8Z,11Z,14Z-eicosatetraenoyl)-ethanolamine + H(+). The enzyme catalyses 1-O-(1Z-octadecenyl)-sn-glycero-3-phospho-(N-9Z-octadecenoyl)-ethanolamine + H2O = 1-O-(1Z-octadecenyl)-sn-glycero-3-phosphate + N-(9Z-octadecenoyl) ethanolamine + H(+). With respect to regulation, lysophospholipase D activity is increased by magnesium and manganese and inhibited by calcium in a concentration dependent manner. Loss of lysophospholipase D activity by addition of EDTA. Functionally, hydrolyzes lysoglycerophospholipids to produce lysophosphatidic acid (LPA) and the corresponding amines. Shows a preference for 1-O-alkyl-sn-glycero-3-phosphocholine (lyso-PAF), lysophosphatidylethanolamine (lyso-PE) and lysophosphatidylcholine (lyso-PC). May be involved in bioactive N-acylethanolamine biosynthesis from both N-acyl-lysoplasmenylethanolamin (N-acyl-lysoPlsEt) and N-acyl-lysophosphatidylethanolamin (N-acyl-lysoPE). In addition, hydrolyzes glycerophospho-N-acylethanolamine to N-acylethanolamine. Does not display glycerophosphodiester phosphodiesterase activity, since it cannot hydrolyze either glycerophosphoinositol or glycerophosphocholine. The chain is Lysophospholipase D GDPD1 from Homo sapiens (Human).